The sequence spans 271 residues: Mannosyl-3-phosphoglycerate phosphatase (271 aa).

D13 serves as the catalytic Nucleophile. Residues D13, D15, and D214 each coordinate Mg(2+).

This sequence belongs to the HAD-like hydrolase superfamily. MPGP family. The cofactor is Mg(2+).

The protein resides in the cytoplasm. The enzyme catalyses 2-O-(alpha-D-mannosyl)-3-phosphoglycerate + H2O = (2R)-2-O-(alpha-D-mannosyl)-glycerate + phosphate. The sequence is that of Mannosyl-3-phosphoglycerate phosphatase (yedP) from Escherichia coli O157:H7.